We begin with the raw amino-acid sequence, 477 residues long: Putative WAS protein family homolog 4 (477 aa).

The WHD1 stretch occupies residues 1–180 (MSGVMCLKAS…EGLGGLPSNI (180 aa)). 2 disordered regions span residues 310 to 420 (QDGV…QGGH) and 434 to 477 (KGIS…DWES). Residues 315–327 (TPPPPPPPPPPAP) show a composition bias toward pro residues. A VCA region spans residues 362–477 (QGAPREVVDP…QAEDEDDWES (116 aa)). The WH2 domain maps to 374–396 (GWATLLESIRQAGGIGKAKLRSM). Over residues 395 to 411 (SMKERKLEKQQQKEQEQ) the composition is skewed to basic and acidic residues. Gly residues predominate over residues 437-449 (SGKGPGAGDGPGG).

It belongs to the WASH1 family. Interacts (via WHD1 region) with WASHC2C; the interaction is direct.

Its subcellular location is the early endosome membrane. It is found in the recycling endosome membrane. May act as a nucleation-promoting factor at the surface of endosomes, where it recruits and activates the Arp2/3 complex to induce actin polymerization, playing a key role in the fission of tubules that serve as transport intermediates during endosome sorting. This is Putative WAS protein family homolog 4 (WASH4P) from Homo sapiens (Human).